The sequence spans 214 residues: MVRGKTQMKRIENATSRQVTFSKRRNGLLKKAFELSVLCDAEVSLIIFSPKGKLYEFASSNMQDTIDRYLRHTKDRVSTKPVSEENMQHLKYEAANMMKKIEQLEASKRKLLGEGIGTCSIEELQQIEQQLEKSVKCIRARKTQVFKEQIEQLKQKEKALAAENEKLSEKWGSHESEVWSNKNQESTGRGDEESSPSSEVETQLFIGLPCSSRK.

One can recognise an MADS-box domain in the interval 3 to 57 (RGKTQMKRIENATSRQVTFSKRRNGLLKKAFELSVLCDAEVSLIIFSPKGKLYEF). In terms of domain architecture, K-box spans 87–177 (MQHLKYEAAN…SEKWGSHESE (91 aa)). Residues 162–177 (AENEKLSEKWGSHESE) show a composition bias toward basic and acidic residues. The interval 162–214 (AENEKLSEKWGSHESEVWSNKNQESTGRGDEESSPSSEVETQLFIGLPCSSRK) is disordered. A compositionally biased stretch (polar residues) spans 178 to 187 (VWSNKNQEST).

As to quaternary structure, forms a heterodimer with AGL24 through MADS-box domain. Interacts with AGL15, AGL16 and AGL19. Interacts with OXS3 in the nucleus. In terms of tissue distribution, widely expressed. Not found in the apical meristem of short-day grown plants in vegetative stage.

Its subcellular location is the nucleus. The protein localises to the cytoplasm. In terms of biological role, transcription activator active in flowering time control. May integrate signals from the photoperiod, vernalization and autonomous floral induction pathways. Can modulate class B and C homeotic genes expression. When associated with AGL24, mediates effect of gibberellins on flowering under short-day conditions, and regulates the expression of LEAFY (LFY), which links floral induction and floral development. This Arabidopsis thaliana (Mouse-ear cress) protein is MADS-box protein SOC1.